Consider the following 257-residue polypeptide: 3-methyl-2-oxobutanoate hydroxymethyltransferase (257 aa).

Residues D42 and D81 each contribute to the Mg(2+) site. Residues 42–43 (DS), D81, and K110 each bind 3-methyl-2-oxobutanoate. A Mg(2+)-binding site is contributed by E112. The active-site Proton acceptor is the E176.

This sequence belongs to the PanB family. In terms of assembly, homodecamer; pentamer of dimers. The cofactor is Mg(2+).

The protein resides in the cytoplasm. It carries out the reaction 3-methyl-2-oxobutanoate + (6R)-5,10-methylene-5,6,7,8-tetrahydrofolate + H2O = 2-dehydropantoate + (6S)-5,6,7,8-tetrahydrofolate. The protein operates within cofactor biosynthesis; (R)-pantothenate biosynthesis; (R)-pantoate from 3-methyl-2-oxobutanoate: step 1/2. Catalyzes the reversible reaction in which hydroxymethyl group from 5,10-methylenetetrahydrofolate is transferred onto alpha-ketoisovalerate to form ketopantoate. The polypeptide is 3-methyl-2-oxobutanoate hydroxymethyltransferase (Pelagibacter ubique (strain HTCC1062)).